Here is a 955-residue protein sequence, read N- to C-terminus: Disintegrin and metalloproteinase domain-containing protein 19 (955 aa).

A signal peptide spans 1 to 25 (MPGGAGAARLCLLAFALQPLRPRAA). The propeptide occupies 26–202 (REPGWTRGSE…QTKKRPRRMK (177 aa)). The short motif at 130–137 (STCRGIRG) is the Cysteine switch element. C132 contributes to the Zn(2+) binding site. N144 carries N-linked (GlcNAc...) asparagine glycosylation. Residues 203-699 (REDLNSMKYV…IDSGPMPPES (497 aa)) lie on the Extracellular side of the membrane. The Peptidase M12B domain occupies 210–408 (KYVELYLVAD…GGGMCLSNMP (199 aa)). 3 disulfides stabilise this stretch: C320–C403, C360–C387, and C361–C370. H345 contributes to the Zn(2+) binding site. Residue E346 is part of the active site. The Zn(2+) site is built by H349 and H355. The Disintegrin domain occupies 416–502 (GRRCGNGYLE…HCPTNFYQMD (87 aa)). N444 and N447 each carry an N-linked (GlcNAc...) asparagine glycan. C474 and C494 form a disulfide bridge. N645 carries N-linked (GlcNAc...) asparagine glycosylation. The region spanning 650-682 (ETEGCGKKCNGHGVCNNNQNCHCLPGWAPPFCN) is the EGF-like domain. 3 disulfide bridges follow: C654–C664, C658–C670, and C672–C681. A helical membrane pass occupies residues 700 to 720 (VGPVVAGVLVAILVLAVLMLM). Residues 721 to 955 (YYCCRQNNKL…AKHSCFLVPA (235 aa)) are Cytoplasmic-facing. The segment covering 753 to 771 (SQNSGTGHANPTFKLQTPQ) has biased composition (polar residues). The tract at residues 753 to 917 (SQNSGTGHAN…LKVKAGTRGL (165 aa)) is disordered. 2 stretches are compositionally biased toward pro residues: residues 787 to 796 (SQPPPRPPPD) and 833 to 844 (RPPPSRPIPPAP). The short motif at 833–844 (RPPPSRPIPPAP) is the SH3-binding element.

In terms of assembly, interacts with SH3PXD2A. Zn(2+) is required as a cofactor. Post-translationally, the precursor is cleaved by a furin endopeptidase. Expressed in many normal organ tissues and several cancer cell lines.

It localises to the membrane. Functionally, participates in the proteolytic processing of beta-type neuregulin isoforms which are involved in neurogenesis and synaptogenesis, suggesting a regulatory role in glial cell. Also cleaves alpha-2 macroglobulin. May be involved in osteoblast differentiation and/or osteoblast activity in bone. This Homo sapiens (Human) protein is Disintegrin and metalloproteinase domain-containing protein 19 (ADAM19).